The sequence spans 253 residues: ATP synthase subunit b 1 (253 aa).

The chain crosses the membrane as a helical span at residues 2-22 (LIDWFTVIAELVNFLILVWLL).

This sequence belongs to the ATPase B chain family. As to quaternary structure, F-type ATPases have 2 components, F(1) - the catalytic core - and F(0) - the membrane proton channel. F(1) has five subunits: alpha(3), beta(3), gamma(1), delta(1), epsilon(1). F(0) has four main subunits: a(1), b(2) and c(10-14). The alpha and beta chains form an alternating ring which encloses part of the gamma chain. F(1) is attached to F(0) by a central stalk formed by the gamma and epsilon chains, while a peripheral stalk is formed by the delta and b chains.

It is found in the cell inner membrane. Its function is as follows. F(1)F(0) ATP synthase produces ATP from ADP in the presence of a proton or sodium gradient. F-type ATPases consist of two structural domains, F(1) containing the extramembraneous catalytic core and F(0) containing the membrane proton channel, linked together by a central stalk and a peripheral stalk. During catalysis, ATP synthesis in the catalytic domain of F(1) is coupled via a rotary mechanism of the central stalk subunits to proton translocation. Functionally, component of the F(0) channel, it forms part of the peripheral stalk, linking F(1) to F(0). The chain is ATP synthase subunit b 1 from Prosthecochloris aestuarii (strain DSM 271 / SK 413).